The following is a 312-amino-acid chain: Pyridoxal kinase (312 aa).

At Met-1 the chain carries N-acetylmethionine. Residues Ser-12 and Thr-47 each coordinate pyridoxal. Thr-47 is a pyridoxal 5'-phosphate binding site. At Ser-59 the chain carries Phosphoserine. Residue Asp-113 participates in ATP binding. Asp-113 is a binding site for Na(+). Asp-118 contributes to the Mg(2+) binding site. Thr-148 contributes to the Na(+) binding site. Position 150 to 153 (150 to 153 (NQFE)) interacts with ATP. Position 164 is a phosphoserine (Ser-164). Residue Thr-186 participates in Na(+) binding. Residue 186–187 (TS) coordinates ATP. The residue at position 213 (Ser-213) is a Phosphoserine. ATP-binding positions include 226–228 (VEA) and Thr-233. 234-235 (GD) serves as a coordination point for pyridoxal 5'-phosphate. Asp-235 (proton acceptor) is an active-site residue. Phosphoserine is present on Ser-285.

It belongs to the pyridoxine kinase family. In terms of assembly, homodimer. Zn(2+) is required as a cofactor. The cofactor is Mg(2+).

It localises to the cytoplasm. It is found in the cytosol. It carries out the reaction pyridoxal + ATP = pyridoxal 5'-phosphate + ADP + H(+). The catalysed reaction is pyridoxamine + ATP = pyridoxamine 5'-phosphate + ADP + H(+). It catalyses the reaction pyridoxine + ATP = pyridoxine 5'-phosphate + ADP + H(+). Its pathway is cofactor metabolism; pyridoxal 5'-phosphate salvage; pyridoxal 5'-phosphate from pyridoxal: step 1/1. It participates in cofactor metabolism; pyridoxal 5'-phosphate salvage; pyridoxine 5'-phosphate from pyridoxine: step 1/1. The protein operates within cofactor metabolism; pyridoxal 5'-phosphate salvage; pyridoxamine 5'-phosphate from pyridoxamine: step 1/1. Activity is increased in the presence of K(+)or Na(+). Its function is as follows. Catalyzes the phosphorylation of the dietary vitamin B6 vitamers pyridoxal (PL), pyridoxine (PN) and pyridoxamine (PM) to form pyridoxal 5'-phosphate (PLP), pyridoxine 5'-phosphate (PNP) and pyridoxamine 5'-phosphate (PMP), respectively. PLP is the active form of vitamin B6, and acts as a cofactor for over 140 different enzymatic reactions. This is Pyridoxal kinase from Mus musculus (Mouse).